A 326-amino-acid chain; its full sequence is Pantothenate kinase (326 aa).

An ATP-binding site is contributed by 104–111 (GSVAVGKS).

Belongs to the prokaryotic pantothenate kinase family.

Its subcellular location is the cytoplasm. It catalyses the reaction (R)-pantothenate + ATP = (R)-4'-phosphopantothenate + ADP + H(+). It participates in cofactor biosynthesis; coenzyme A biosynthesis; CoA from (R)-pantothenate: step 1/5. The sequence is that of Pantothenate kinase from Parvibaculum lavamentivorans (strain DS-1 / DSM 13023 / NCIMB 13966).